A 168-amino-acid polypeptide reads, in one-letter code: Phosphopantetheine adenylyltransferase (168 aa).

Residue Ser8 participates in substrate binding. ATP-binding positions include 8-9 (SF) and His16. 3 residues coordinate substrate: Lys40, Thr72, and Arg86. ATP is bound by residues 87–89 (GLR), Glu97, and 122–128 (YSFLSSS).

The protein belongs to the bacterial CoaD family. In terms of assembly, homohexamer. The cofactor is Mg(2+).

The protein localises to the cytoplasm. It carries out the reaction (R)-4'-phosphopantetheine + ATP + H(+) = 3'-dephospho-CoA + diphosphate. Its pathway is cofactor biosynthesis; coenzyme A biosynthesis; CoA from (R)-pantothenate: step 4/5. Functionally, reversibly transfers an adenylyl group from ATP to 4'-phosphopantetheine, yielding dephospho-CoA (dPCoA) and pyrophosphate. The protein is Phosphopantetheine adenylyltransferase of Thermosynechococcus vestitus (strain NIES-2133 / IAM M-273 / BP-1).